Consider the following 357-residue polypeptide: (4E)-oxalomesaconate Delta-isomerase (357 aa).

This sequence belongs to the PrpF family.

The enzyme catalyses (1E)-4-oxobut-1-ene-1,2,4-tricarboxylate = (3Z)-2-oxo-4-carboxy-3-hexenedioate. It functions in the pathway secondary metabolite metabolism; lignin degradation. Its function is as follows. Contributes to the degradation of lignin at the level of the protocatechuate 4,5-cleavage pathway. Catalyzes the isomerization of the double bond between C4 and C5 in (4E)-oxalomesaconate (OMA) to (3Z)-2-keto-4-carboxy-3-hexenedioate (KCH), where the double bond has migrated between C3 and C4 via a 1,3-allylic isomerization. This is (4E)-oxalomesaconate Delta-isomerase from Novosphingobium sp. (strain KA1) (Sphingomonas sp. (strain KA1)).